The following is a 61-amino-acid chain: uncharacterized protein (61 aa).

The Extracellular portion of the chain corresponds to 1 to 20 (MSSTTSTINLSSLGSAINDV). A helical membrane pass occupies residues 21–41 (LNIIVQYLPVFVTVAVLFGII). Residues 42–61 (TYMTGGLGGLFSGITGIFGS) lie on the Cytoplasmic side of the membrane.

The protein resides in the host membrane. This is an uncharacterized protein from Acidianus filamentous virus 2 (isolate Italy/Pozzuoli) (AFV-2).